Reading from the N-terminus, the 85-residue chain is Small ribosomal subunit protein uS17 (85 aa).

The protein belongs to the universal ribosomal protein uS17 family. In terms of assembly, part of the 30S ribosomal subunit.

One of the primary rRNA binding proteins, it binds specifically to the 5'-end of 16S ribosomal RNA. This Lachnoclostridium phytofermentans (strain ATCC 700394 / DSM 18823 / ISDg) (Clostridium phytofermentans) protein is Small ribosomal subunit protein uS17.